The chain runs to 396 residues: Phosphoglycerate kinase (396 aa).

Residues 21-23, arginine 36, 59-62, arginine 119, and arginine 156 contribute to the substrate site; these read DFN and HLGK. ATP contacts are provided by residues lysine 206, glutamate 325, and 352–355; that span reads GGDS.

The protein belongs to the phosphoglycerate kinase family. As to quaternary structure, monomer.

It localises to the cytoplasm. The catalysed reaction is (2R)-3-phosphoglycerate + ATP = (2R)-3-phospho-glyceroyl phosphate + ADP. Its pathway is carbohydrate degradation; glycolysis; pyruvate from D-glyceraldehyde 3-phosphate: step 2/5. In Staphylococcus epidermidis (strain ATCC 35984 / DSM 28319 / BCRC 17069 / CCUG 31568 / BM 3577 / RP62A), this protein is Phosphoglycerate kinase.